Reading from the N-terminus, the 167-residue chain is MADPARAAKLAQRIKVVVAEALGRRVKDPRVESITVTDARVTNDLQHATIYYTVFGDDVAQADAARALEKAKGVLRQEVGRNITVRLTPTLEFVADQIPVNASNLEELLREAKRRDAEVAALAASAKHAGEADPYKGDSPEDIDEDDFDEEDTDLSGDNDLDEDANR.

The tract at residues 122 to 167 (LAASAKHAGEADPYKGDSPEDIDEDDFDEEDTDLSGDNDLDEDANR) is disordered. Residues 128–139 (HAGEADPYKGDS) are compositionally biased toward basic and acidic residues. Acidic residues predominate over residues 140–167 (PEDIDEDDFDEEDTDLSGDNDLDEDANR).

The protein belongs to the RbfA family. Monomer. Binds 30S ribosomal subunits, but not 50S ribosomal subunits or 70S ribosomes.

It is found in the cytoplasm. Its function is as follows. One of several proteins that assist in the late maturation steps of the functional core of the 30S ribosomal subunit. Associates with free 30S ribosomal subunits (but not with 30S subunits that are part of 70S ribosomes or polysomes). Required for efficient processing of 16S rRNA. May interact with the 5'-terminal helix region of 16S rRNA. The protein is Ribosome-binding factor A of Paenarthrobacter aurescens (strain TC1).